Here is a 380-residue protein sequence, read N- to C-terminus: Alpha-N-acetylneuraminate alpha-2,8-sialyltransferase ST8SIA3 (380 aa).

Residues Met-1–Val-9 lie on the Cytoplasmic side of the membrane. The helical; Signal-anchor for type II membrane protein transmembrane segment at Ala-10–Leu-33 threads the bilayer. At Lys-34–Ala-380 the chain is on the lumenal side. N-linked (GlcNAc...) asparagine glycosylation is found at Asn-93, Asn-113, and Asn-160. Disulfide bonds link Cys-162/Cys-313 and Cys-176/Cys-379. Residues Asn-167 and Asn-190 each contribute to the CMP-N-acetyl-beta-neuraminate site. N-linked (GlcNAc...) asparagine glycosylation is present at Asn-206. Residues Ser-300, Thr-301, Gly-302, Trp-322, Tyr-336, and His-337 each coordinate CMP-N-acetyl-beta-neuraminate. The active-site Proton donor/acceptor is the His-354.

It belongs to the glycosyltransferase 29 family. As to quaternary structure, homodimer. Post-translationally, autopolysialylated. As to expression, expressed in fetal and adult brain and fetal liver.

It is found in the golgi apparatus membrane. The catalysed reaction is [N-acetyl-alpha-D-neuraminosyl-(2-&gt;8)](n) + CMP-N-acetyl-beta-neuraminate = [N-acetyl-alpha-D-neuraminosyl-(2-&gt;8)](n+1) + CMP + H(+). The enzyme catalyses alpha-Neu5Ac-(2-&gt;3)-beta-D-Gal-(1-&gt;4)-6S-D-GlcNAc + CMP-N-acetyl-beta-neuraminate = alpha-Neu5Ac-(2-&gt;8)-alpha-Neu5Ac-(2-&gt;3)-beta-D-Gal-(1-&gt;4)-6S-D-GlcNAc + CMP + H(+). It carries out the reaction a ganglioside GM3 (d18:1(4E)) + CMP-N-acetyl-beta-neuraminate = a ganglioside GD3 (d18:1(4E)) + CMP + H(+). It catalyses the reaction a ganglioside GM3 + CMP-N-acetyl-beta-neuraminate = a ganglioside GD3 + CMP + H(+). The catalysed reaction is an N-acetyl-alpha-neuraminyl-(2-&gt;3)-beta-D-galactosyl derivative + CMP-N-acetyl-beta-neuraminate = an N-acetyl-alpha-neuraminyl-(2-&gt;8)-N-acetyl-alpha-neuraminyl-(2-&gt;3)-beta-D-galactosyl derivative + CMP + H(+). The enzyme catalyses an N-acetyl-alpha-neuraminyl-(2-&gt;3)-beta-D-galactosyl-(1-&gt;4)-N-acetyl-beta-D-glucosaminyl derivative + CMP-N-acetyl-beta-neuraminate = an alpha-Neu5Ac-(2-&gt;8)-alpha-Neu5Ac-(2-&gt;3)-beta-D-Gal-(1-&gt;4)-beta-D-GlcNAc derivative + CMP + H(+). It participates in protein modification; protein glycosylation. Catalyzes the transfer of sialic acid from a CMP-linked sialic acid donor onto a terminal alpha-2,3-, alpha-2,6-, or alpha-2,8-linked sialic acid of an acceptor, such as N-linked oligosaccharides of glycoproteins and glycolipids through alpha-2,8-linkages. Forms oligosialic and polysialic acid on various sialylated N-acetyllactosamine oligosaccharides of glycoproteins, including FETUB N-glycans, a2-HS-glycoprotein (AHSG) and alpha 2,3-sialylated glycosphingolipids, such as alpha 2,3-sialylparagloboside and ganglioside GM3 and to a lesser extent NCAM1 N-glycans. However, it is much more specific to N-linked oligosaccharides of glycoproteins than glycosphingolipids. 2,3-sialylparagloboside serves as the best acceptor substrate among the glycolipids. alpha-Neu5Ac-(2-&gt;8)-alpha-Neu5Ac-(2-&gt;3)-beta-D-Gal-(1-&gt;4)-6S-D-GlcNAc and monosialyl and disialyl N-acetyllactosamines are the best acceptor substrates among glycoproteins. May plays critical role in the striatum by mediating the formation of disialylated and trisialylated terminal glycotopes on N- and O-glycans of specific striatal proteins, regulating their distribution in lipid rafts, affecting their interaction with other binding partners, and subsequently modulating striatal functions. The polypeptide is Alpha-N-acetylneuraminate alpha-2,8-sialyltransferase ST8SIA3 (Homo sapiens (Human)).